The following is a 324-amino-acid chain: Methionyl-tRNA formyltransferase (324 aa).

113 to 116 (SLLP) lines the (6S)-5,6,7,8-tetrahydrofolate pocket.

It belongs to the Fmt family.

The catalysed reaction is L-methionyl-tRNA(fMet) + (6R)-10-formyltetrahydrofolate = N-formyl-L-methionyl-tRNA(fMet) + (6S)-5,6,7,8-tetrahydrofolate + H(+). Attaches a formyl group to the free amino group of methionyl-tRNA(fMet). The formyl group appears to play a dual role in the initiator identity of N-formylmethionyl-tRNA by promoting its recognition by IF2 and preventing the misappropriation of this tRNA by the elongation apparatus. The sequence is that of Methionyl-tRNA formyltransferase from Bacteroides fragilis (strain ATCC 25285 / DSM 2151 / CCUG 4856 / JCM 11019 / LMG 10263 / NCTC 9343 / Onslow / VPI 2553 / EN-2).